Reading from the N-terminus, the 594-residue chain is Acyl-coenzyme A thioesterase 11 (594 aa).

Residues 1–20 (MIQNVGNHLRRGFASMFSNR) constitute a mitochondrion transit peptide. Ser-15 and Ser-25 each carry phosphoserine. The segment at 20 to 43 (RTSRKSISHPESGDPPTMAEGEGY) is disordered. Residues 45–157 (NPTEVQMSQL…LATFVAHREL (113 aa)) enclose the HotDog ACOT-type 1 domain. Residues 93-95 (TAS), 122-124 (NSS), Arg-183, and 272-274 (HFR) contribute to the CoA site. The 114-residue stretch at 217 to 330 (EKTRVESVEL…FMTFVVLDKD (114 aa)) folds into the HotDog ACOT-type 2 domain. The START domain maps to 370–582 (KQAEVALSVP…FKACESFLLD (213 aa)).

The protein localises to the mitochondrion matrix. It is found in the cytoplasm. The catalysed reaction is hexadecanoyl-CoA + H2O = hexadecanoate + CoA + H(+). It catalyses the reaction tetradecanoyl-CoA + H2O = tetradecanoate + CoA + H(+). The enzyme catalyses dodecanoyl-CoA + H2O = dodecanoate + CoA + H(+). It carries out the reaction butanoyl-CoA + H2O = butanoate + CoA + H(+). The protein operates within lipid metabolism; fatty acid metabolism. Functionally, has an acyl-CoA thioesterase activity with a preference for the long chain fatty acyl-CoA thioesters hexadecanoyl-CoA/palmitoyl-CoA and tetradecanoyl-CoA/myristoyl-CoA which are the main substrates in the mitochondrial beta-oxidation pathway. The sequence is that of Acyl-coenzyme A thioesterase 11 (Acot11) from Mus musculus (Mouse).